Consider the following 1040-residue polypeptide: MADAFGDELFSVFEDDSTSAAGAKKDKEKEKWKGPPGSADKAGKRLDTKLQSESASGGKNKRDLDVEGTDEPIFGKKPRIEDSINEDLSLADLMPRVKVQSVETVEGCTHEVALPADEDYIPLKPRVGKAAKEYPFILDAFQREAIQCVDNNQSVLVSAHTSAGKTVCAEYAIALALREKQRVIFTSPIKALSNQKYREMYEEFQDVGLMTGDVTINPTASCLVMTTEILRSMLYRGSEVMREVAWVIFDEIHYMRDSERGVVWEETIILLPDNVHYVFLSATIPNARQFAEWICHLHKQPCHVIYTDYRPTPLQHYIFPAGGDGLHLVVDENGDFREDNFNTAMQVLRDAGDLAKGDQKGRKGGTKGPSNVFKIVKMIMERNFQPVIIFSFSKKDCEAYALQMTKLDFNTDEEKKMVEEVFNNAIDCLSDEDKKLPQVEHVLPLLKRGIGIHHGGLLPILKETIEILFSEGLIKALFATETFAMGINMPARTVLFTNARKYDGKDFRWISSGEYIQMSGRAGRRGMDDRGIVILMVDEKMSPTIGKQLLKGSADPLNSAFHLTYNMVLNLLRVEEINPEYMLEKSFYQFQHYRAIPGVVEKVKNSEEQYNKIVIPNEENVVIYYKIRQQLAKLGKEIEEYIHKPKYCLPFLQPGRLVKVKNEGDDFGWGVVVNFSKKSNVKPNSGELDPLYVVEVLLRCSKESLKNSATEAAKPAKPDEKGEMQVVPVLVHLLSAISTVRLYIPKDLRPVDNRQSVLKSIQEVQRRFPDGVPLLDPIDDMGIQDQGLKKVIQKVEAFEHRMYSHPLHNDPNLETVYTLCERKAQIALDIKSAKRELKKARTVLQMDELKCRKRVLRRLGFATSSDVIEMKGRVACEISSADELLLTEMMFNGLFNDLSSEQATALLSCFVFQENSSEMPKLTEQLAGPLRQMQECAKRIAKVSAEAKLEIDEETYLSSFKPHLMDVVYTWATGATFAHICKMTDVFEGSIIRCMRRLEELLRQMCQAAKAIGNTELENKFAEGITKIKRDIVFAASLYL.

Residue Ala-2 is modified to N-acetylalanine. A disordered region spans residues 16–77 (DSTSAAGAKK…GTDEPIFGKK (62 aa)). Residues 23–33 (AKKDKEKEKWK) are compositionally biased toward basic and acidic residues. Residue Lys-24 forms a Glycyl lysine isopeptide (Lys-Gly) (interchain with G-Cter in SUMO2) linkage. A Phosphoserine modification is found at Ser-38. The segment covering 41-50 (KAGKRLDTKL) has biased composition (basic and acidic residues). An N6-acetyllysine mark is found at Lys-49 and Lys-76. ATP-binding positions include Ile-137, 159 to 166 (AHTSAGKT), Ser-162, Gly-164, Lys-165, and Thr-166. The Helicase ATP-binding domain maps to 146 to 302 (IQCVDNNQSV…WICHLHKQPC (157 aa)). The short motif at 250–253 (DEIH) is the DEIH box element. Lys-356 participates in a covalent cross-link: Glycyl lysine isopeptide (Lys-Gly) (interchain with G-Cter in SUMO2). The region spanning 403–575 (QMTKLDFNTD…NMVLNLLRVE (173 aa)) is the Helicase C-terminal domain. Glycyl lysine isopeptide (Lys-Gly) (interchain with G-Cter in SUMO2) cross-links involve residues Lys-682 and Lys-721.

This sequence belongs to the helicase family. SKI2 subfamily. As to quaternary structure, component of a TRAMP-like complex, an ATP-dependent exosome regulatory complex consisting of a helicase (MTREX), an oligadenylate polymerase (TENT4B or TENT4A), and a substrate specific RNA-binding factor (ZCCHC7 or ZCCHC8). Several TRAMP-like complexes exist with specific compositions and are associated with nuclear, or nucleolar RNA exosomes. Identified in the spliceosome C complex. Component of the poly(A) tail exosome targeting (PAXT) complex made of PABPN1, ZFC3H1 and MTREX that directs a subset of long and polyadenylated poly(A) RNAs for exosomal degradation. Component of the nuclear exosome targeting (NEXT) complex composed of MTREX, ZCCHC8, and RBM7 that directs a subset of non-coding short-lived RNAs for exosomal degradation. Interacts with ZCCHC8; this interaction bridges the interaction between RBM7 and MTREX. Binds to ZFC3H1 and RBM7 in a RNase-insensitive manner. Interacts with EXOSC10; the interaction mediates the association of MTREX with nuclear RNA exosomes. Interacts with isoform 1 of NVL in an ATP-dependent manner; the interaction is required to associate NVL with nuclear RNA exosome. Interacts with WDR74; the interaction dissociation in a late stage of rRNA synthesis is required for appropriate maturation of pre-60S particles and depends on the ATPase activity of NVL. Interacts with MPHOSPH6. Interacts with the RNA cap-binding complex proteins NCBP1 and SRRT. Interacts with NRDE2; the interaction is direct and negatively regulates MTREX function in exosomal degradation by changing its conformation precluding interaction with ZFC3H1, the RNA cap-binding complex proteins NCBP1 and SRRT, and association with the exosome. Associates with the RNA exosome complex.

The protein resides in the nucleus. It localises to the nucleoplasm. The protein localises to the nucleolus. Its subcellular location is the nucleus speckle. The enzyme catalyses ATP + H2O = ADP + phosphate + H(+). Its activity is regulated as follows. Activated when MTREX is incorporated into NEXT complex an the nuclear RNA exosome complex. Its function is as follows. Catalyzes the ATP-dependent unwinding of RNA duplexes with a single-stranded 3' RNA extension. Central subunit of many protein complexes, namely TRAMP-like, nuclear exosome targeting (NEXT) and poly(A) tail exosome targeting (PAXT). NEXT functions as an RNA exosome cofactor that directs a subset of non-coding short-lived RNAs for exosomal degradation. NEXT is involved in surveillance and turnover of aberrant transcripts and non-coding RNAs. PAXT directs a subset of long and polyadenylated poly(A) RNAs for exosomal degradation. The RNA exosome is fundamental for the degradation of RNA in eukaryotic nuclei. Substrate targeting is facilitated by its cofactor ZCCHC8, which links to RNA-binding protein adapters. Associated with the RNA exosome complex and involved in the 3'-processing of the 7S pre-RNA to the mature 5.8S rRNA. May be involved in pre-mRNA splicing. In the context of NEXT complex can also in vitro unwind DNA:RNA heteroduplexes with a 3' poly (A) RNA tracking strand. Can promote unwinding and degradation of structured RNA substrates when associated with the nuclear exosome and its cofactors. Can displace a DNA strand while translocating on RNA to ultimately degrade the RNA within a DNA/RNA heteroduplex. Plays a role in DNA damage response. The polypeptide is Exosome RNA helicase MTR4 (Mus musculus (Mouse)).